The following is an 84-amino-acid chain: RNA-binding protein Hfq (84 aa).

In terms of domain architecture, Sm spans 10 to 69 (DPFLNILRKERIPVSIYLVNGIKLQGQIDSFDQYVVLLKNSVTQMVYKHAISTIVPAKAI).

The protein belongs to the Hfq family. Homohexamer.

In terms of biological role, RNA chaperone that binds small regulatory RNA (sRNAs) and mRNAs to facilitate mRNA translational regulation in response to envelope stress, environmental stress and changes in metabolite concentrations. Also binds with high specificity to tRNAs. In Nitrosomonas europaea (strain ATCC 19718 / CIP 103999 / KCTC 2705 / NBRC 14298), this protein is RNA-binding protein Hfq.